Here is a 731-residue protein sequence, read N- to C-terminus: MDTSGHFHDSGVGDLDEDPKCPCPSSGDEQQQQQQQQQQQQPPPPAPPAAPQQPLGPSLQPQPPQLQQQQQQQQQQQQQQPPHPLSQLAQLQSQPVHPGLLHSSPTAFRAPPSSNSTAILHPSSRQGSQLNLNDHLLGHSPSSTATSGPGGGSRHRQASPLVHRRDSNPFTEIAMSSCKYSGGVMKPLSRLSASRRNLIEAETEGQPLQLFSPSNPPEIVISSREDNHAHQTLLHHPNATHNHQHAGTTASSTTFPKANKRKNQNIGYKLGHRRALFEKRKRLSDYALIFGMFGIVVMVIETELSWGLYSKDSMFSLALKCLISLSTIILLGLIIAYHTREVQLFVIDNGADDWRIAMTYERILYISLEMLVCAIHPIPGEYKFFWTARLAFSYTPSRAEADVDIILSIPMFLRLYLIARVMLLHSKLFTDASSRSIGALNKINFNTRFVMKTLMTICPGTVLLVFSISLWIIAAWTVRVCERYHDQQDVTSNFLGAMWLISITFLSIGYGDMVPHTYCGKGVCLLTGIMGAGCTALVVAVVARKLELTKAEKHVHNFMMDTQLTKRIKNAAANVLRETWLIYKHTKLLKKIDHAKVRKHQRKFLQAIHQLRSVKMEQRKLSDQANTLVDLSKMQNVMYDLITELNDRSEDLEKQIGSLESKLEHLTASFNSLPLLIADTLRQQQQQLLSAIIEARGVSVAVGTTHTPISDSPIGVSSTSFPTPYTSSSSC.

Residues 1 to 11 (MDTSGHFHDSG) are compositionally biased toward basic and acidic residues. Disordered stretches follow at residues 1-170 (MDTS…SNPF) and 239-258 (ATHNHQHAGTTASSTTFPKA). Residues 30-40 (QQQQQQQQQQQ) show a composition bias toward low complexity. Residues 41–51 (QPPPPAPPAAP) show a composition bias toward pro residues. The segment covering 52-95 (QQPLGPSLQPQPPQLQQQQQQQQQQQQQQPPHPLSQLAQLQSQP) has biased composition (low complexity). Positions 112–132 (PSSNSTAILHPSSRQGSQLNL) are enriched in polar residues. Residues 138-147 (GHSPSSTATS) are compositionally biased toward low complexity. S167 is subject to Phosphoserine. Residues 239 to 256 (ATHNHQHAGTTASSTTFP) show a composition bias toward polar residues. A helical membrane pass occupies residues 288–308 (LIFGMFGIVVMVIETELSWGL). The chain crosses the membrane as a helical span at residues 315 to 335 (FSLALKCLISLSTIILLGLII). A helical membrane pass occupies residues 366-386 (ISLEMLVCAIHPIPGEYKFFW). The helical transmembrane segment at 405–425 (IILSIPMFLRLYLIARVMLLH) threads the bilayer. Residues 454-474 (LMTICPGTVLLVFSISLWIIA) traverse the membrane as a helical segment. The pore-forming intramembrane region spans 494–514 (FLGAMWLISITFLSIGYGDMV). The helical transmembrane segment at 523 to 543 (VCLLTGIMGAGCTALVVAVVA) threads the bilayer. Positions 561–637 (DTQLTKRIKN…LVDLSKMQNV (77 aa)) are calmodulin-binding. Positions 642–669 (ITELNDRSEDLEKQIGSLESKLEHLTAS) form a coiled coil. Residues 709–731 (ISDSPIGVSSTSFPTPYTSSSSC) are disordered. Residues 717–731 (SSTSFPTPYTSSSSC) show a composition bias toward low complexity.

Belongs to the potassium channel KCNN family. KCa2.3/KCNN3 subfamily. As to quaternary structure, homodimer. Heteromultimer with KCNN2 or KCNN1; this modulates plasma membrane expression and consequently the small conductance calcium-activated potassium channel activity. The complex is composed of 4 channel subunits each of which binds to a calmodulin subunit which regulates the channel activity through calcium-binding. Interacts with CALM1. As to expression, widely distributed in human tissues and is present at 20-60% of KCNN3 in the brain.

It is found in the cell membrane. The protein resides in the cytoplasm. Its subcellular location is the myofibril. The protein localises to the sarcomere. It localises to the z line. The enzyme catalyses K(+)(in) = K(+)(out). Inhibited by bee venom neurotoxin apamin. Its function is as follows. Small conductance calcium-activated potassium channel that mediates the voltage-independent transmembrane transfer of potassium across the cell membrane through a constitutive interaction with calmodulin which binds the intracellular calcium allowing its opening. The current is characterized by a voltage-independent activation, an intracellular calcium concentration increase-dependent activation and a single-channel conductance of 10 picosiemens. Also presents an inwardly rectifying current, thus reducing its already small outward conductance of potassium ions, which is particularly the case when the membrane potential displays positive values, above + 20 mV. Activation is followed by membrane hyperpolarization. Thought to regulate neuronal excitability by contributing to the slow component of synaptic afterhyperpolarization. In terms of biological role, does not function as a small conductance calcium-activated potassium channel. Selectively suppresses endogenous KCNN3 currents, in a dominant-negative fashion by decreasing the abundance of functional channels in the plasma membrane, possibly by selectively coassembling with and sequestering native KCNN3 protein in intracellular compartments. This dominant inhibitory effect extends to other members of the SK subfamily. The protein is Small conductance calcium-activated potassium channel protein 3 of Homo sapiens (Human).